Consider the following 269-residue polypeptide: Small ribosomal subunit protein eS1 (269 aa).

The tract at residues 1-20 is disordered; the sequence is MAVGKNKGVSKGGKKGSKKK.

This sequence belongs to the eukaryotic ribosomal protein eS1 family. In terms of assembly, component of the small ribosomal subunit. Mature ribosomes consist of a small (40S) and a large (60S) subunit. The 40S subunit contains about 33 different proteins and 1 molecule of RNA (18S). The 60S subunit contains about 49 different proteins and 3 molecules of RNA (28S, 5.8S and 5S).

The protein resides in the cytoplasm. Its function is as follows. Has an essential role in oogenesis. In Anopheles gambiae (African malaria mosquito), this protein is Small ribosomal subunit protein eS1.